We begin with the raw amino-acid sequence, 409 residues long: NADH-quinone oxidoreductase subunit D (409 aa).

The protein belongs to the complex I 49 kDa subunit family. In terms of assembly, NDH-1 is composed of 14 different subunits. Subunits NuoB, C, D, E, F, and G constitute the peripheral sector of the complex.

The protein localises to the cell inner membrane. The enzyme catalyses a quinone + NADH + 5 H(+)(in) = a quinol + NAD(+) + 4 H(+)(out). NDH-1 shuttles electrons from NADH, via FMN and iron-sulfur (Fe-S) centers, to quinones in the respiratory chain. The immediate electron acceptor for the enzyme in this species is believed to be ubiquinone. Couples the redox reaction to proton translocation (for every two electrons transferred, four hydrogen ions are translocated across the cytoplasmic membrane), and thus conserves the redox energy in a proton gradient. This Sulfurovum sp. (strain NBC37-1) protein is NADH-quinone oxidoreductase subunit D.